Consider the following 386-residue polypeptide: Mannitol-1-phosphate 5-dehydrogenase (386 aa).

3-14 lines the NAD(+) pocket; sequence AVHFGAGNIGRG.

Belongs to the mannitol dehydrogenase family.

The enzyme catalyses D-mannitol 1-phosphate + NAD(+) = beta-D-fructose 6-phosphate + NADH + H(+). This chain is Mannitol-1-phosphate 5-dehydrogenase, found in Brevibacillus brevis (strain 47 / JCM 6285 / NBRC 100599).